The sequence spans 138 residues: MAKPILRIGSRKNTRSGSRKNVRRIPKGVIHVQASFNNTIVTVTDVRGRVISWSSAGTCGFKGTRRGTPFAAQTAAGNAIRAVVDQGMQRAEVRIKGPGLGRDAALRAIRRSGILLSFVRDVTPMPHNGCRPPKKRRV.

Residues 1 to 23 (MAKPILRIGSRKNTRSGSRKNVR) are disordered. A compositionally biased stretch (basic residues) spans 9 to 23 (GSRKNTRSGSRKNVR).

This sequence belongs to the universal ribosomal protein uS11 family. Part of the 30S ribosomal subunit.

It localises to the plastid. The protein resides in the chloroplast. The polypeptide is Small ribosomal subunit protein uS11c (Barbarea verna (Land cress)).